A 286-amino-acid chain; its full sequence is ATP synthase gamma chain (286 aa).

It belongs to the ATPase gamma chain family. In terms of assembly, F-type ATPases have 2 components, CF(1) - the catalytic core - and CF(0) - the membrane proton channel. CF(1) has five subunits: alpha(3), beta(3), gamma(1), delta(1), epsilon(1). CF(0) has three main subunits: a, b and c.

The protein localises to the cell inner membrane. Produces ATP from ADP in the presence of a proton gradient across the membrane. The gamma chain is believed to be important in regulating ATPase activity and the flow of protons through the CF(0) complex. This Pseudoalteromonas translucida (strain TAC 125) protein is ATP synthase gamma chain.